A 992-amino-acid polypeptide reads, in one-letter code: UPF0182 protein RHA1_ro06389 (992 aa).

7 helical membrane passes run 18–38 (VLLVLALVVAALLLVGPRLIS), 63–83 (LLLFLVVGVVVGGIVWLALLL), 114–134 (LFGLAIPIAVGLLAGLIAQSS), 174–194 (WLFVAVLLAFFASLVTHYIFG), 211–231 (VQLAVLAGTFILLKAVAYWFD), 260–280 (KLILLAIAVICAGAFFAAIFL), and 288–308 (MATALLVLSSILVGAVWPLVV). Residues 904 to 948 (TGSVATAPSAEEGTPPETGTTPPVDQGAAPAPTAPATPPSGTDVS) form a disordered region. The segment covering 908-934 (ATAPSAEEGTPPETGTTPPVDQGAAPA) has biased composition (low complexity).

The protein belongs to the UPF0182 family.

The protein resides in the cell membrane. The chain is UPF0182 protein RHA1_ro06389 from Rhodococcus jostii (strain RHA1).